We begin with the raw amino-acid sequence, 138 residues long: Cysteine desulfuration protein SufE (138 aa).

Cys-51 acts as the Cysteine persulfide intermediate in catalysis.

Belongs to the SufE family. Homodimer. Interacts with SufS.

Its subcellular location is the cytoplasm. It functions in the pathway cofactor biosynthesis; iron-sulfur cluster biosynthesis. In terms of biological role, participates in cysteine desulfuration mediated by SufS. Cysteine desulfuration mobilizes sulfur from L-cysteine to yield L-alanine and constitutes an essential step in sulfur metabolism for biosynthesis of a variety of sulfur-containing biomolecules. Functions as a sulfur acceptor for SufS, by mediating the direct transfer of the sulfur atom from the S-sulfanylcysteine of SufS, an intermediate product of cysteine desulfuration process. This chain is Cysteine desulfuration protein SufE, found in Shigella flexneri serotype 5b (strain 8401).